The sequence spans 187 residues: MVVGLFGGSFNPPHAGHALVAEIALRRLGLDQLWWMVTPGNPLKSRSELASLEDRIAACERLVSDPRIKVTAFEKSLGISYTANTLAKVKAKNPHVRFIWIMGADNLKSFHRWQKWREIAETFPIAVIDRPGSTLSYLSSTMAQAFSQARIDEDDAGVLWKKKAPAWVFIHGPRSTLSSTALRNNHK.

Belongs to the NadD family.

The catalysed reaction is nicotinate beta-D-ribonucleotide + ATP + H(+) = deamido-NAD(+) + diphosphate. The protein operates within cofactor biosynthesis; NAD(+) biosynthesis; deamido-NAD(+) from nicotinate D-ribonucleotide: step 1/1. Catalyzes the reversible adenylation of nicotinate mononucleotide (NaMN) to nicotinic acid adenine dinucleotide (NaAD). The polypeptide is Probable nicotinate-nucleotide adenylyltransferase (Agrobacterium fabrum (strain C58 / ATCC 33970) (Agrobacterium tumefaciens (strain C58))).